A 228-amino-acid polypeptide reads, in one-letter code: MSYVFVNDSSQTNVPLLQACIDGDFNYSKRLLESGFDPNIRDSRGRTGLHLAAARGNVDICQLLHKFGADLLATDYQGNTALHLCGHVDTIQFLVSNGLKIDICNHQGATPLVLAKRRGVNKDVIRLLESLEEQEVKGFNRGTHSKLETMQTAESESAMESHSLLNPNLQQGEGVLSSFRTTWQEFVEDLGFWRVLLLIFVIALLSLGIAYYVSGVLPFVENQPELVH.

ANK repeat units lie at residues 11–40, 44–73, 77–103, and 107–138; these read QTNV…DPNI, RGRT…DLLA, QGNT…KIDI, and QGAT…EVKG. Residues 195–215 traverse the membrane as a helical segment; that stretch reads VLLLIFVIALLSLGIAYYVSG.

Its subcellular location is the membrane. The chain is Ankyrin repeat domain-containing protein 46 (ANKRD46) from Bos taurus (Bovine).